We begin with the raw amino-acid sequence, 601 residues long: MAGNRGCKPRRFEGNQRMDIFKRLLKLARPHAPRFAVAMVCMLIAGALTSSLAFLVKPALDDIFLDRNAEMLKWIPLAIILIYLVKGGCSYFQAILMSFIGQRIVADLRNRLYEQIQKQSLSFFSKNPTGVLMSRITNDVNSIQGTVSDAVTSLMKDSFTLICLVFVIFYRDWQLAIIAMIVFPLTIYPIAKFGQKMRSVATRTQVTMGSLTTLLQETISGTRIVRAFCMEAHENQRFARENEKLMHLALKSVSINALSSPFMEFLGGIGIAAIIFYGGYQVIKGSSTPGTFFSFLTALIMLYEPVKRLTNVNNTIQQGIAGAQRVFSIIDLVPDIVDRDEAVELPRISEKIEIRNISFAYDDTPVLRNINLTIRAGEVVAFVGMSGGGKTTLVNLIPRFYDVTAGQILIDGHDIRDVSLISLRRQIGIVTQQTILFNDTVRNNIAYGSQGCSEKEIIEAARAANAHDFIVNLPEGYDTVIGELGTKLSGGERQRISIARALLKNAPILILDEATSSLDTEAEMEVQEALERLMKGRTTLVIAHRLSTIRNADRIVVLVKGEIVEEGAHETLLARRGEYYKLHQLQFKEDKVGEEVGRNDS.

Helical transmembrane passes span 35–55, 77–97, 150–170, 173–193, 263–283, and 286–306; these read FAVA…LAFL, LAII…AILM, AVTS…VIFY, WQLA…IAKF, MEFL…YQVI, and SSTP…YEPV. The ABC transmembrane type-1 domain maps to 36-318; that stretch reads AVAMVCMLIA…LTNVNNTIQQ (283 aa). The 234-residue stretch at 352 to 585 folds into the ABC transporter domain; it reads IEIRNISFAY…RGEYYKLHQL (234 aa). Position 384–391 (384–391) interacts with ATP; the sequence is GMSGGGKT.

Belongs to the ABC transporter superfamily. Lipid exporter (TC 3.A.1.106) family. As to quaternary structure, homodimer.

It localises to the cell inner membrane. The enzyme catalyses ATP + H2O + lipid A-core oligosaccharideSide 1 = ADP + phosphate + lipid A-core oligosaccharideSide 2.. Functionally, involved in lipopolysaccharide (LPS) biosynthesis. Translocates lipid A-core from the inner to the outer leaflet of the inner membrane. Transmembrane domains (TMD) form a pore in the inner membrane and the ATP-binding domain (NBD) is responsible for energy generation. This is ATP-dependent lipid A-core flippase from Syntrophus aciditrophicus (strain SB).